A 1872-amino-acid chain; its full sequence is Ral GTPase-activating protein subunit alpha-2 (1872 aa).

Phosphoserine is present on residues serine 373, serine 376, and serine 379. Residues 446–469 (DKKDVAEEDADKLGLSETDSKEVS) show a composition bias toward basic and acidic residues. The interval 446 to 481 (DKKDVAEEDADKLGLSETDSKEVSSESSGHKRSSSW) is disordered. Phosphoserine is present on residues serine 486 and serine 696. Disordered regions lie at residues 711–730 (FRSATTSGAPGVEKARNTVR) and 758–849 (QPVP…TGSD). Residue threonine 715 is modified to Phosphothreonine; by PKB. The segment covering 775–795 (SDSSQGQKVENSQNLSSSEPK) has biased composition (polar residues). Over residues 796–810 (SVQESKGHVTHEHEG) the composition is skewed to basic and acidic residues. Residues serine 819 and serine 820 each carry the phosphoserine modification. Residues 824 to 843 (LDLKEESQQTHGRCRERQKS) are compositionally biased toward basic and acidic residues. Serine 1592 is modified (phosphoserine). Residues 1634-1842 (LKNLDSRQCR…EERALYLEAI (209 aa)) enclose the Rap-GAP domain.

Component of the heterodimeric RalGAP2 complex with RALGAPB. Heterodimerization is required for activity. In terms of tissue distribution, highly expressed in lung, liver, testis and thymus with lower levels in brain and heart (at protein level).

The protein resides in the cytoplasm. Functionally, catalytic subunit of the heterodimeric RalGAP2 complex which acts as a GTPase activator for the Ras-like small GTPases RALA and RALB. This chain is Ral GTPase-activating protein subunit alpha-2, found in Rattus norvegicus (Rat).